Reading from the N-terminus, the 546-residue chain is Chaperonin GroEL 2 (546 aa).

ATP-binding positions include 30–33, Lys-51, 87–91, Gly-415, 479–481, and Asp-495; these read TLGP, DGTTT, and NAA. Positions 526–546 are disordered; the sequence is KEDAPMPGGMPGGMGGMGMDM. Gly residues predominate over residues 534–546; it reads GMPGGMGGMGMDM.

The protein belongs to the chaperonin (HSP60) family. As to quaternary structure, forms a cylinder of 14 subunits composed of two heptameric rings stacked back-to-back. Interacts with the co-chaperonin GroES.

It localises to the cytoplasm. It carries out the reaction ATP + H2O + a folded polypeptide = ADP + phosphate + an unfolded polypeptide.. Its function is as follows. Together with its co-chaperonin GroES, plays an essential role in assisting protein folding. The GroEL-GroES system forms a nano-cage that allows encapsulation of the non-native substrate proteins and provides a physical environment optimized to promote and accelerate protein folding. In Burkholderia lata (strain ATCC 17760 / DSM 23089 / LMG 22485 / NCIMB 9086 / R18194 / 383), this protein is Chaperonin GroEL 2.